The following is a 371-amino-acid chain: 4-hydroxy-3-methylbut-2-en-1-yl diphosphate synthase (flavodoxin) (371 aa).

Cys-272, Cys-275, Cys-307, and Glu-314 together coordinate [4Fe-4S] cluster.

Belongs to the IspG family. It depends on [4Fe-4S] cluster as a cofactor.

It catalyses the reaction (2E)-4-hydroxy-3-methylbut-2-enyl diphosphate + oxidized [flavodoxin] + H2O + 2 H(+) = 2-C-methyl-D-erythritol 2,4-cyclic diphosphate + reduced [flavodoxin]. The protein operates within isoprenoid biosynthesis; isopentenyl diphosphate biosynthesis via DXP pathway; isopentenyl diphosphate from 1-deoxy-D-xylulose 5-phosphate: step 5/6. Functionally, converts 2C-methyl-D-erythritol 2,4-cyclodiphosphate (ME-2,4cPP) into 1-hydroxy-2-methyl-2-(E)-butenyl 4-diphosphate. The sequence is that of 4-hydroxy-3-methylbut-2-en-1-yl diphosphate synthase (flavodoxin) from Magnetococcus marinus (strain ATCC BAA-1437 / JCM 17883 / MC-1).